Here is a 210-residue protein sequence, read N- to C-terminus: 2-hydroxy-3-keto-5-methylthiopentenyl-1-phosphate phosphatase (210 aa).

This sequence belongs to the HAD-like hydrolase superfamily. MtnX family.

The enzyme catalyses 2-hydroxy-5-methylsulfanyl-3-oxopent-1-enyl phosphate + H2O = 1,2-dihydroxy-5-(methylsulfanyl)pent-1-en-3-one + phosphate. It functions in the pathway amino-acid biosynthesis; L-methionine biosynthesis via salvage pathway; L-methionine from S-methyl-5-thio-alpha-D-ribose 1-phosphate: step 4/6. Functionally, dephosphorylates 2-hydroxy-3-keto-5-methylthiopentenyl-1-phosphate (HK-MTPenyl-1-P) yielding 1,2-dihydroxy-3-keto-5-methylthiopentene (DHK-MTPene). In Microcystis aeruginosa (strain NIES-843 / IAM M-2473), this protein is 2-hydroxy-3-keto-5-methylthiopentenyl-1-phosphate phosphatase.